Consider the following 322-residue polypeptide: Quinolinate synthase (322 aa).

Iminosuccinate-binding residues include His-36 and Ser-53. Residue Cys-98 coordinates [4Fe-4S] cluster. Residues 124–126 (YIN) and Ser-141 each bind iminosuccinate. Cys-184 is a binding site for [4Fe-4S] cluster. Iminosuccinate is bound by residues 210 to 212 (HPE) and Thr-227. Cys-278 is a [4Fe-4S] cluster binding site.

This sequence belongs to the quinolinate synthase family. Type 2 subfamily. [4Fe-4S] cluster serves as cofactor.

The protein localises to the cytoplasm. It catalyses the reaction iminosuccinate + dihydroxyacetone phosphate = quinolinate + phosphate + 2 H2O + H(+). Its pathway is cofactor biosynthesis; NAD(+) biosynthesis; quinolinate from iminoaspartate: step 1/1. In terms of biological role, catalyzes the condensation of iminoaspartate with dihydroxyacetone phosphate to form quinolinate. This is Quinolinate synthase from Chloroherpeton thalassium (strain ATCC 35110 / GB-78).